The sequence spans 469 residues: uncharacterized protein (469 aa).

The region spanning 13–81 (TPLYEQLYTF…PKIGWFAAEV (69 aa)) is the HTH gntR-type domain. Positions 41–60 (KRRLSSLLDVSTATIERAYE) form a DNA-binding region, H-T-H motif. Lysine 309 carries the post-translational modification N6-(pyridoxal phosphate)lysine.

In the C-terminal section; belongs to the class-I pyridoxal-phosphate-dependent aminotransferase family. The cofactor is pyridoxal 5'-phosphate.

This is an uncharacterized protein from Bacillus subtilis (strain 168).